Consider the following 129-residue polypeptide: Small ribosomal subunit protein uS11 (129 aa).

The protein belongs to the universal ribosomal protein uS11 family. Part of the 30S ribosomal subunit. Interacts with proteins S7 and S18. Binds to IF-3.

Its function is as follows. Located on the platform of the 30S subunit, it bridges several disparate RNA helices of the 16S rRNA. Forms part of the Shine-Dalgarno cleft in the 70S ribosome. This Bradyrhizobium sp. (strain ORS 278) protein is Small ribosomal subunit protein uS11.